Reading from the N-terminus, the 201-residue chain is dTTP/UTP pyrophosphatase (201 aa).

The active-site Proton acceptor is the aspartate 81.

It belongs to the Maf family. YhdE subfamily. It depends on a divalent metal cation as a cofactor.

Its subcellular location is the cytoplasm. The catalysed reaction is dTTP + H2O = dTMP + diphosphate + H(+). The enzyme catalyses UTP + H2O = UMP + diphosphate + H(+). Its function is as follows. Nucleoside triphosphate pyrophosphatase that hydrolyzes dTTP and UTP. May have a dual role in cell division arrest and in preventing the incorporation of modified nucleotides into cellular nucleic acids. The protein is dTTP/UTP pyrophosphatase of Dechloromonas aromatica (strain RCB).